The primary structure comprises 72 residues: Translation initiation factor IF-1 (72 aa).

An S1-like domain is found at 1–72 (MAKEDNIEMQ…SKGRIVFRSR (72 aa)).

It belongs to the IF-1 family. Component of the 30S ribosomal translation pre-initiation complex which assembles on the 30S ribosome in the order IF-2 and IF-3, IF-1 and N-formylmethionyl-tRNA(fMet); mRNA recruitment can occur at any time during PIC assembly.

It localises to the cytoplasm. Its function is as follows. One of the essential components for the initiation of protein synthesis. Stabilizes the binding of IF-2 and IF-3 on the 30S subunit to which N-formylmethionyl-tRNA(fMet) subsequently binds. Helps modulate mRNA selection, yielding the 30S pre-initiation complex (PIC). Upon addition of the 50S ribosomal subunit IF-1, IF-2 and IF-3 are released leaving the mature 70S translation initiation complex. The polypeptide is Translation initiation factor IF-1 (Shewanella pealeana (strain ATCC 700345 / ANG-SQ1)).